A 721-amino-acid polypeptide reads, in one-letter code: Polyribonucleotide nucleotidyltransferase (721 aa).

Mg(2+) contacts are provided by D495 and D501. One can recognise a KH domain in the interval P562–I621. In terms of domain architecture, S1 motif spans G631–R699. The tract at residues G700 to S721 is disordered.

This sequence belongs to the polyribonucleotide nucleotidyltransferase family. Requires Mg(2+) as cofactor.

It localises to the cytoplasm. It catalyses the reaction RNA(n+1) + phosphate = RNA(n) + a ribonucleoside 5'-diphosphate. Involved in mRNA degradation. Catalyzes the phosphorolysis of single-stranded polyribonucleotides processively in the 3'- to 5'-direction. This is Polyribonucleotide nucleotidyltransferase from Synechococcus sp. (strain CC9902).